The chain runs to 248 residues: Small ribosomal subunit protein uS2 (248 aa).

This sequence belongs to the universal ribosomal protein uS2 family.

The polypeptide is Small ribosomal subunit protein uS2 (Cupriavidus necator (strain ATCC 17699 / DSM 428 / KCTC 22496 / NCIMB 10442 / H16 / Stanier 337) (Ralstonia eutropha)).